Consider the following 810-residue polypeptide: Type I restriction enzyme EcoAI endonuclease subunit (810 aa).

A Helicase ATP-binding domain is found at 183–343 (EAVSNGQNRV…TDYFGDPVYV (161 aa)). 197-203 (ATGTGKT) lines the ATP pocket. In terms of domain architecture, Helicase C-terminal spans 412-575 (TITDYLKRTN…DIADPESDFE (164 aa)). Residues 578-588 (LEEISEHDEEQ) are compositionally biased toward acidic residues. The disordered stretch occupies residues 578–608 (LEEISEHDEEQVTGVDEPPAPPYQVTDTDDV).

It belongs to the HsdR family. In terms of assembly, the type I restriction/modification system is composed of three polypeptides R, M and S. The restriction enzyme has stoichiometry R(2)M(2)S(1) while the methyltransferase is M(2)S(1).

The enzyme catalyses Endonucleolytic cleavage of DNA to give random double-stranded fragments with terminal 5'-phosphates, ATP is simultaneously hydrolyzed.. In terms of biological role, the subtype B restriction (R) subunit of a type I restriction enzyme that recognizes 5'-GAGN(7)GTCA-3' and cleaves a random distance away. Subunit R is required for both nuclease and ATPase activities, but not for modification. After locating a non-methylated recognition site, the enzyme complex serves as a molecular motor that translocates DNA in an ATP-dependent manner until a collision occurs that triggers cleavage. The sequence is that of Type I restriction enzyme EcoAI endonuclease subunit from Escherichia coli.